The sequence spans 475 residues: Glycogen synthase (475 aa).

Lys15 lines the ADP-alpha-D-glucose pocket.

The protein belongs to the glycosyltransferase 1 family. Bacterial/plant glycogen synthase subfamily.

The catalysed reaction is [(1-&gt;4)-alpha-D-glucosyl](n) + ADP-alpha-D-glucose = [(1-&gt;4)-alpha-D-glucosyl](n+1) + ADP + H(+). Its pathway is glycan biosynthesis; glycogen biosynthesis. Functionally, synthesizes alpha-1,4-glucan chains using ADP-glucose. This chain is Glycogen synthase, found in Chlamydia felis (strain Fe/C-56) (Chlamydophila felis).